The sequence spans 261 residues: 5-oxoprolinase subunit A (261 aa).

This sequence belongs to the LamB/PxpA family. In terms of assembly, forms a complex composed of PxpA, PxpB and PxpC.

The catalysed reaction is 5-oxo-L-proline + ATP + 2 H2O = L-glutamate + ADP + phosphate + H(+). Functionally, catalyzes the cleavage of 5-oxoproline to form L-glutamate coupled to the hydrolysis of ATP to ADP and inorganic phosphate. This is 5-oxoprolinase subunit A from Coprothermobacter proteolyticus (strain ATCC 35245 / DSM 5265 / OCM 4 / BT).